A 400-amino-acid polypeptide reads, in one-letter code: Putative lysosomal acid lipase/cholesteryl ester hydrolase (400 aa).

The first 17 residues, Met1 to Ser17, serve as a signal peptide directing secretion. 3 N-linked (GlcNAc...) asparagine glycosylation sites follow: Asn34, Asn129, and Asn159. Residues Pro78–Gly378 form the AB hydrolase-1 domain. Ser172 acts as the Charge relay system in catalysis. Asn271 is a glycosylation site (N-linked (GlcNAc...) asparagine). Residue His372 is the Charge relay system of the active site.

Belongs to the AB hydrolase superfamily. Lipase family. In terms of tissue distribution, expressed by the venom gland.

The protein localises to the secreted. The enzyme catalyses a sterol ester + H2O = a sterol + a fatty acid + H(+). Its function is as follows. In physiological conditions, is crucial for intracellular hydrolysis of cholesteryl esters and triglycerides that have been internalized via receptor-mediated endocytosis of lipoprotein particles. In venom, the biological contribution is unknown. In Crotalus adamanteus (Eastern diamondback rattlesnake), this protein is Putative lysosomal acid lipase/cholesteryl ester hydrolase.